The following is a 782-amino-acid chain: uncharacterized protein (782 aa).

Disordered regions lie at residues 1 to 127 (MTTT…SAMK), 205 to 234 (NAAA…SYNP), and 308 to 355 (PYNF…SYLR). The span at 24–54 (KPQEEPTMKDKALLFEKQRQEKKMKHTEAKM) shows a compositional bias: basic and acidic residues. A compositionally biased stretch (low complexity) spans 82-118 (KNVNNATSTNNATSTKNNTKNTPKNTPKNIPKNTTAK). A compositionally biased stretch (polar residues) spans 312-324 (ARNNHGSDVSSAM). The segment covering 326–336 (NARRQASETRR) has biased composition (basic and acidic residues). The segment covering 337–346 (SNLSSYNDRN) has biased composition (polar residues). Residues 361–628 (MEKIRTEVDK…ERLRERLREL (268 aa)) are a coiled coil. Residues 629–668 (GSRDRSYNRSSRDRSHDRLYERSPRSRDRSSRDRSRDRYS) show a composition bias toward basic and acidic residues. A disordered region spans residues 629–689 (GSRDRSYNRS…SDSVKDYSVG (61 aa)). Residues 669 to 678 (RSRSRSRYRR) are compositionally biased toward basic residues. Basic and acidic residues predominate over residues 679–689 (RSDSVKDYSVG).

This is an uncharacterized protein from Yarrowia lipolytica (strain CLIB 122 / E 150) (Yeast).